The primary structure comprises 385 residues: Putative F-box protein At1g47765 (385 aa).

Residues 1-19 (MEQQKQKKRKVVSKSKRTQ) are compositionally biased toward basic residues. The segment at 1 to 24 (MEQQKQKKRKVVSKSKRTQSKSAS) is disordered. Residues 20–69 (SKSASSLPLDLTSEILLRLPEKSIARFRCVSKLWLSITTDPYFINLFETR) enclose the F-box domain.

This Arabidopsis thaliana (Mouse-ear cress) protein is Putative F-box protein At1g47765.